A 470-amino-acid chain; its full sequence is METRKDDMEKRNDKSEPLLLPENGSDVSEEASWMVYLSTIIAVCGSYEFGTCVGYSAPTQFGIMEELNLSYSQFSVFGSILNMGAVLGAITSGKISDFIGRKGAMRLSSVISAIGWLIIYLAKGDVPLDFGRFLTGYGCGTLSFVVPVFIAEISPRKLRGALATLNQLFIVIGLASMFLIGAVVNWRTLALTGVAPCVVLFFGTWFIPESPRWLEMVGRHSDFEIALQKLRGPQANITREAGEIQEYLASLAHLPKATLMDLIDKKNIRFVIVGVGLMFFQQFVGINGVIFYAQQIFVSAGASPTLGSILYSIEQVVLTALGATLLIDRLGRRPLLMASAVGMLIGCLLIGNSFLLKAHGLALDIIPALAVSGVLVYIGSFSIGMGAIPWVIMSEIFPINLKGTAGGLVTVVNWLSSWLVSFTFNFLMIWSPHGTFYVYGGVCVLAIIFIAKLVPETKGRTLEEIQAMMM.

The segment covering 1-16 (METRKDDMEKRNDKSE) has biased composition (basic and acidic residues). Residues 1-24 (METRKDDMEKRNDKSEPLLLPENG) are disordered. The next 12 membrane-spanning stretches (helical) occupy residues 33–53 (WMVY…GTCV), 73–93 (QFSV…ITSG), 110–130 (VISA…PLDF), 133–153 (FLTG…IAEI), 164–184 (TLNQ…GAVV), 188–208 (TLAL…WFIP), 270–290 (FVIV…NGVI), 307–327 (GSIL…TLLI), 335–355 (LLMA…NSFL), 373–393 (GVLV…WVIM), 409–429 (VTVV…FLMI), and 434–454 (GTFY…AKLV).

This sequence belongs to the major facilitator superfamily. Sugar transporter (TC 2.A.1.1) family.

It is found in the membrane. In terms of biological role, sugar transporter. The polypeptide is Sugar transporter ERD6-like 8 (Arabidopsis thaliana (Mouse-ear cress)).